Consider the following 385-residue polypeptide: Polyketide synthase 3 (385 aa).

The active site involves Cys-157.

The protein belongs to the thiolase-like superfamily. Chalcone/stilbene synthases family. As to expression, expressed in male and female flowers, and seedlings.

Its subcellular location is the cytoplasm. Functionally, polyketide synthase responsible for the biosynthesis of secondary metabolites. The chain is Polyketide synthase 3 (PKSF3) from Cannabis sativa (Hemp).